Here is a 452-residue protein sequence, read N- to C-terminus: Enolase (452 aa).

Position 167 (Gln-167) interacts with (2R)-2-phosphoglycerate. Residue Glu-209 is the Proton donor of the active site. Mg(2+)-binding residues include Asp-250, Glu-307, and Asp-334. (2R)-2-phosphoglycerate-binding residues include Lys-359, Arg-388, Ser-389, and Lys-410. Lys-359 functions as the Proton acceptor in the catalytic mechanism.

It belongs to the enolase family. Mg(2+) serves as cofactor.

It localises to the cytoplasm. The protein resides in the secreted. Its subcellular location is the cell surface. It catalyses the reaction (2R)-2-phosphoglycerate = phosphoenolpyruvate + H2O. It participates in carbohydrate degradation; glycolysis; pyruvate from D-glyceraldehyde 3-phosphate: step 4/5. Catalyzes the reversible conversion of 2-phosphoglycerate (2-PG) into phosphoenolpyruvate (PEP). It is essential for the degradation of carbohydrates via glycolysis. This chain is Enolase, found in Mesomycoplasma hyopneumoniae (strain 232) (Mycoplasma hyopneumoniae).